A 198-amino-acid chain; its full sequence is Dual specificity protein phosphatase 14 (198 aa).

The Tyrosine-protein phosphatase domain maps to G26–G167. C111 acts as the Phosphocysteine intermediate in catalysis.

It belongs to the protein-tyrosine phosphatase family. Non-receptor class dual specificity subfamily. In terms of assembly, interacts with CD28.

It carries out the reaction O-phospho-L-tyrosyl-[protein] + H2O = L-tyrosyl-[protein] + phosphate. The catalysed reaction is O-phospho-L-seryl-[protein] + H2O = L-seryl-[protein] + phosphate. It catalyses the reaction O-phospho-L-threonyl-[protein] + H2O = L-threonyl-[protein] + phosphate. Its function is as follows. Involved in the inactivation of MAP kinases. Dephosphorylates ERK, JNK and p38 MAP-kinases. Plays a negative role in TCR signaling by dephosphorylating MAP3K7 adapter TAB1 leading to its inactivation. The chain is Dual specificity protein phosphatase 14 (DUSP14) from Homo sapiens (Human).